Reading from the N-terminus, the 279-residue chain is Protease HtpX homolog (279 aa).

The next 2 membrane-spanning stretches (helical) occupy residues 4 to 24 (IFLF…VLAV) and 34 to 54 (GSLL…SLLM). Residue H140 participates in Zn(2+) binding. E141 is an active-site residue. H144 serves as a coordination point for Zn(2+). 2 helical membrane passes run 155–175 (LIQG…ANLI) and 189–209 (FLVS…IVMW). A Zn(2+)-binding site is contributed by E215.

Belongs to the peptidase M48B family. The cofactor is Zn(2+).

The protein resides in the cell inner membrane. The protein is Protease HtpX homolog of Neisseria gonorrhoeae (strain ATCC 700825 / FA 1090).